The sequence spans 146 residues: Hemoglobin subunit beta (146 aa).

The Globin domain occupies 2–146; it reads HWSAEEKQLI…VAHALARKYH (145 aa). Heme b contacts are provided by H63 and H92.

This sequence belongs to the globin family. In terms of assembly, heterotetramer of two alpha chains and two beta chains. In terms of tissue distribution, red blood cells.

Functionally, involved in oxygen transport from the lung to the various peripheral tissues. This chain is Hemoglobin subunit beta (HBB), found in Streptopelia orientalis (Eastern turtle dove).